Consider the following 227-residue polypeptide: Guanylate kinase (227 aa).

The region spanning 21 to 199 (GNLFMVVAPS…ALAELECIVA (179 aa)) is the Guanylate kinase-like domain. Position 28 to 35 (28 to 35 (APSGAGKS)) interacts with ATP.

This sequence belongs to the guanylate kinase family.

It is found in the cytoplasm. It carries out the reaction GMP + ATP = GDP + ADP. In terms of biological role, essential for recycling GMP and indirectly, cGMP. The chain is Guanylate kinase from Burkholderia lata (strain ATCC 17760 / DSM 23089 / LMG 22485 / NCIMB 9086 / R18194 / 383).